We begin with the raw amino-acid sequence, 316 residues long: Aquaglyceroporin-2 (316 aa).

The tract at residues methionine 1–glycine 31 is disordered. The Cytoplasmic portion of the chain corresponds to methionine 1–glutamate 59. Polar residues predominate over residues serine 11 to glycine 24. Residues phenylalanine 60 to serine 80 traverse the membrane as a helical segment. Residues lysine 81 to asparagine 86 are Extracellular-facing. Residues tryptophan 87–histidine 107 form a helical membrane-spanning segment. At tyrosine 108–lysine 131 the chain is on the cytoplasmic side. The NPA 1 motif lies at asparagine 114 to alanine 116. Residues valine 132–leucine 152 traverse the membrane as a helical segment. The Extracellular segment spans residues asparagine 153–serine 187. Asparagine 172 carries an N-linked (GlcNAc...) asparagine glycan. Residues isoleucine 188–alanine 208 traverse the membrane as a helical segment. Residues methionine 209 to arginine 219 lie on the Cytoplasmic side of the membrane. A helical membrane pass occupies residues isoleucine 220–glutamate 240. The Extracellular segment spans residues threonine 241–lysine 271. The short motif at asparagine 246–alanine 248 is the NPA 2 element. The helical transmembrane segment at phenylalanine 272–tyrosine 292 threads the bilayer. Residues aspartate 293–alanine 316 are Cytoplasmic-facing.

Belongs to the MIP/aquaporin (TC 1.A.8) family.

The protein localises to the cell membrane. Its subcellular location is the membrane. The catalysed reaction is H2O(in) = H2O(out). The enzyme catalyses glycerol(in) = glycerol(out). With respect to regulation, polyethylene glycol (PEG) stimulates whereas glycerol inhibits the aquaporin activity. Water channel required to facilitate the transport of water across membranes. Stimulates plant drought tolerance by facilitating the transport of water from the arbuscular mycorrhiza fungus to host plants. In Rhizophagus irregularis (Arbuscular mycorrhizal fungus), this protein is Aquaglyceroporin-2.